The chain runs to 282 residues: ATP synthase subunit a (282 aa).

The next 6 membrane-spanning stretches (helical) occupy residues 38–58, 97–117, 145–165, 187–207, 225–247, and 261–281; these read VDSM…LWLA, FVAP…AMDM, VVPT…LLLC, FGSH…EFVA, LIFI…GHIV, and TLQA…AHEG.

The protein belongs to the ATPase A chain family. In terms of assembly, F-type ATPases have 2 components, CF(1) - the catalytic core - and CF(0) - the membrane proton channel. CF(1) has five subunits: alpha(3), beta(3), gamma(1), delta(1), epsilon(1). CF(0) has three main subunits: a(1), b(2) and c(9-12). The alpha and beta chains form an alternating ring which encloses part of the gamma chain. CF(1) is attached to CF(0) by a central stalk formed by the gamma and epsilon chains, while a peripheral stalk is formed by the delta and b chains.

The protein resides in the cell inner membrane. Key component of the proton channel; it plays a direct role in the translocation of protons across the membrane. This Azoarcus sp. (strain BH72) protein is ATP synthase subunit a.